The sequence spans 513 residues: 2-isopropylmalate synthase (513 aa).

In terms of domain architecture, Pyruvate carboxyltransferase spans 5 to 268 (LIIFDTTLRD…DVGIDTTQIV (264 aa)). The Mn(2+) site is built by Asp14, His202, His204, and Asn239. A regulatory domain region spans residues 394 to 513 (RFISLSQRSE…KAVQKINPQI (120 aa)).

This sequence belongs to the alpha-IPM synthase/homocitrate synthase family. LeuA type 1 subfamily. As to quaternary structure, homodimer. It depends on Mn(2+) as a cofactor.

The protein localises to the cytoplasm. The catalysed reaction is 3-methyl-2-oxobutanoate + acetyl-CoA + H2O = (2S)-2-isopropylmalate + CoA + H(+). The protein operates within amino-acid biosynthesis; L-leucine biosynthesis; L-leucine from 3-methyl-2-oxobutanoate: step 1/4. In terms of biological role, catalyzes the condensation of the acetyl group of acetyl-CoA with 3-methyl-2-oxobutanoate (2-ketoisovalerate) to form 3-carboxy-3-hydroxy-4-methylpentanoate (2-isopropylmalate). This chain is 2-isopropylmalate synthase, found in Cupriavidus metallidurans (strain ATCC 43123 / DSM 2839 / NBRC 102507 / CH34) (Ralstonia metallidurans).